The sequence spans 55 residues: Rubredoxin-2 (55 aa).

The Rubredoxin-like domain maps to 1 to 54; that stretch reads MRKWQCVVCGFIYDEALGLPEEGIPAGTRWEDIPADWVCPDCGVGKIDFEMIEI. 4 residues coordinate Fe cation: Cys-6, Cys-9, Cys-39, and Cys-42.

This sequence belongs to the rubredoxin family. Fe(3+) is required as a cofactor.

The protein localises to the cytoplasm. It participates in hydrocarbon metabolism; alkane degradation. In terms of biological role, involved in the hydrocarbon hydroxylating system, which transfers electrons from NADH to rubredoxin reductase and then through rubredoxin to alkane 1 monooxygenase. In Pseudomonas aeruginosa (strain ATCC 15692 / DSM 22644 / CIP 104116 / JCM 14847 / LMG 12228 / 1C / PRS 101 / PAO1), this protein is Rubredoxin-2 (rubA2).